We begin with the raw amino-acid sequence, 504 residues long: MSFSVDVLANIAIELQRGIGHQDRFQRLITTLRQVLECDASALLRYDSRQFIPLAIDGLAKGVLGRRFALEGHPRLEAIARAGDVVRFPADSELPDPYDGLIPGQESLKVHACVGLPLFAGQNLIGALTLDGMQPDQFDVFSDEELRLIAALAAGALSNALLIEQLESQNMMPGDATPFEAVKQTQMIGLSPGMTQLKKEIEIVAASDLNVLISGETGTGKELVAKAIHEASPRAVNPLVYLNCAALPESVAESELFGHVKGAFTGAISNRSGKFEMADNGTLFLDEIGELSLALQAKLLRVLQYGDIQRVGDDRSLRVDVRVLAATNRDLREEVLAGRFRADLFHRLSVFPLSVPPLRERGDDVILLAGYFCEQCRLRLGLSRVVLSAGARNLLQHYRFPGNVRELEHAIHRAVVLARATRNGDEVILEAQHFAFPEVTLPPPEAAAVPVVKQNLREATEAFQRETIRQALAQNHHNWAACARMLETDVANLHRLAKRLGMKD.

The residue at position 57 (Asp-57) is a 4-aspartylphosphate. The Sigma-54 factor interaction domain occupies 187–416 (MIGLSPGMTQ…LEHAIHRAVV (230 aa)). Residues 215 to 222 (GETGTGKE) and 278 to 287 (ADNGTLFLDE) each bind ATP. Residues 479 to 498 (WAACARMLETDVANLHRLAK) constitute a DNA-binding region (H-T-H motif).

The protein operates within nitrogen metabolism; nitric oxide reduction. Its function is as follows. Required for the expression of anaerobic nitric oxide (NO) reductase, acts as a transcriptional activator for at least the norVW operon. Activation also requires sigma-54. The chain is Anaerobic nitric oxide reductase transcription regulator NorR from Shigella boydii serotype 4 (strain Sb227).